We begin with the raw amino-acid sequence, 1722 residues long: Lymphocyte antigen 75 (1722 aa).

The signal sequence occupies residues 1 to 27; sequence MGTRRVTPGCAAGLLVLLLRCFGLAEP. The Extracellular segment spans residues 28 to 1666; it reads SEFSGDDSFT…VVCKVPLSPD (1639 aa). Residues 32–182 enclose the Ricin B-type lectin domain; the sequence is GDDSFTIVNE…FLVGETWHHD (151 aa). An N-linked (GlcNAc...) asparagine glycan is attached at asparagine 135. The region spanning 164–211 is the Fibronectin type-II domain; that stretch reads SYGRPCEFPFLVGETWHHDCIRDENHSGPWCATTLNYEYDQKWGICLK. Intrachain disulfides connect cysteine 169-cysteine 194, cysteine 183-cysteine 209, cysteine 247-cysteine 340, and cysteine 317-cysteine 332. The region spanning 225 to 341 is the C-type lectin 1 domain; it reads QIGSCYQFNN…CEAQQPYVCK (117 aa). Residues asparagine 345 and asparagine 377 are each glycosylated (N-linked (GlcNAc...) asparagine). C-type lectin domains lie at 368–486, 493–625, and 652–791; these read QNGF…YVCK, NDTR…ICKK, and SNLS…WVCQ. 2 disulfides stabilise this stretch: cysteine 389–cysteine 485 and cysteine 462–cysteine 477. Asparagine 529 carries N-linked (GlcNAc...) asparagine glycosylation. Cystine bridges form between cysteine 597–cysteine 614, cysteine 678–cysteine 790, and cysteine 752–cysteine 782. 2 N-linked (GlcNAc...) asparagine glycosylation sites follow: asparagine 843 and asparagine 865. The residue at position 933 (tyrosine 933) is a Phosphotyrosine. N-linked (GlcNAc...) asparagine glycosylation is found at asparagine 934 and asparagine 1076. 2 consecutive C-type lectin domains span residues 958-1091 and 1110-1222; these read FQNK…LCQK and YLNN…ICYY. Cystine bridges form between cysteine 1060–cysteine 1080 and cysteine 1197–cysteine 1211. N-linked (GlcNAc...) asparagine glycosylation is found at asparagine 1225, asparagine 1320, and asparagine 1392. One can recognise a C-type lectin 7 domain in the interval 1251-1374; it reads FQNSCYNFMI…VIDETLHFYQ (124 aa). C-type lectin domains lie at 1401-1513 and 1542-1661; these read YEDG…ICYK and YGDH…VCKV. A disulfide bridge links cysteine 1488 with cysteine 1502. Asparagine 1593 and asparagine 1626 each carry an N-linked (GlcNAc...) asparagine glycan. A disulfide bridge connects residues cysteine 1635 and cysteine 1650. Residues 1667–1691 form a helical membrane-spanning segment; the sequence is YRGIAVLFAVLSVLALISGLIWFLV. Residues 1692-1722 are Cytoplasmic-facing; the sequence is QRNHFRWTGLSSVRYEHGANEDEVMLPSFHD. Residues serine 1703 and serine 1719 each carry the phosphoserine modification.

In terms of tissue distribution, expressed in the thymus and cultured bone marrow cells.

The protein resides in the membrane. Acts as an endocytic receptor to direct captured antigens from the extracellular space to a specialized antigen-processing compartment. Causes reduced proliferation of B lymphocytes. The polypeptide is Lymphocyte antigen 75 (LY75) (Mesocricetus auratus (Golden hamster)).